Here is a 312-residue protein sequence, read N- to C-terminus: Taste receptor type 2 member 9 (312 aa).

The Extracellular segment spans residues 1–9; it reads MPSAIEAIY. Residues 10 to 32 form a helical membrane-spanning segment; that stretch reads IILIAGELTIGIWGNGFIVLVNC. The Cytoplasmic portion of the chain corresponds to 33–52; sequence IDWLKRRDISLIDIILISLA. The helical transmembrane segment at 53-72 threads the bilayer; it reads ISRICLLCVISLDGFFMLLF. At 73–86 the chain is on the extracellular side; sequence PGTYGNSVLVSIVN. A helical transmembrane segment spans residues 87-109; it reads VVWTFANNSSLWFTSCLSIFYLL. Residues 110-128 are Cytoplasmic-facing; the sequence is KIANISHPFFFWLKLKINK. The chain crosses the membrane as a helical span at residues 129 to 146; the sequence is VMLAILLGSFLISLIISV. Topologically, residues 147–180 are extracellular; sequence PKNDDMWYHLFKVSHEENITWKFKVSKIPGTFKQ. Residue N164 is glycosylated (N-linked (GlcNAc...) asparagine). The chain crosses the membrane as a helical span at residues 181-203; the sequence is LTLNLGVMVPFILCLISFFLLLF. At 204-234 the chain is on the cytoplasmic side; that stretch reads SLVRHTKQIRLHATGFRDPSTEAHMRAIKAV. Residues 235 to 257 traverse the membrane as a helical segment; that stretch reads IIFLLLLIVYYPVFLVMTSSALI. Residues 258–261 are Extracellular-facing; the sequence is PQGK. The chain crosses the membrane as a helical span at residues 262–284; it reads LVLMIGDIVTVIFPSSHSFILIM. Residues 285–312 lie on the Cytoplasmic side of the membrane; sequence GNSKLREAFLKMLRFVKCFLRRRKPFVP.

Belongs to the G-protein coupled receptor T2R family. In terms of tissue distribution, expressed in subsets of taste receptor cells of the tongue and palate epithelium and exclusively in gustducin-positive cells.

It localises to the membrane. Its function is as follows. Gustducin-coupled receptor implicated in the perception of bitter compounds in the oral cavity and the gastrointestinal tract. Signals through PLCB2 and the calcium-regulated cation channel TRPM5. The protein is Taste receptor type 2 member 9 (TAS2R9) of Homo sapiens (Human).